The chain runs to 525 residues: uncharacterized protein (525 aa).

Residues 1 to 21 (MLECLSALLVLFAGGGGSVLA) form the signal peptide. Over 22 to 448 (AVQSKTVADP…ISAASQLDKR (427 aa)) the chain is Extracellular. The disordered stretch occupies residues 242–264 (KVSSENCSKDTDDKSGSKKERNT). The chain crosses the membrane as a helical span at residues 449–469 (IFIFTAITVSITTLMMLGFSY). At 470 to 525 (RSRVSFRDHSIDDSDDDNDWSDDEVEFDEEYFYSLPVSIPEKGISLDKMAQQLGVE) the chain is on the cytoplasmic side.

It is found in the membrane. This is an uncharacterized protein from Saccharomyces cerevisiae (strain YJM789) (Baker's yeast).